Here is an 88-residue protein sequence, read N- to C-terminus: Homeobox protein knotted-1-like 2 (88 aa).

The ELK domain occupies 4 to 24 (ELKHELKQGYRDKLVDIREEI). The homeobox; TALE-type DNA-binding region spans 25 to 88 (LRKRRAGKLP…NQRKRNWHNN (64 aa)).

Belongs to the TALE/KNOX homeobox family. Expressed in all tissues examined. Highest expression in leaves.

Its subcellular location is the nucleus. The sequence is that of Homeobox protein knotted-1-like 2 (KNOX2) from Zea mays (Maize).